Consider the following 1883-residue polypeptide: AF4/FMR2 family member lilli (1883 aa).

Positions 1-45 (MAQQQQQQHLQQQQQQHHQQQQLQQLQQQQQLPQYNNNLYNLNYN) are enriched in low complexity. 17 disordered regions span residues 1–88 (MAQQ…SEGD), 140–311 (INST…EKDI), 329–381 (SIAA…SCTT), 449–540 (MPTP…HHQH), 609–654 (LGGG…HLSR), 796–827 (SISSGSASGSSSSDSAAGEVVPLPGPGETLQI), 844–901 (MQQK…KKHA), 922–962 (TAAA…LAKG), 992–1018 (VAGSRKREHSSNSSSNGNTPTKKLHAA), 1039–1075 (TAAAGSSSDEDSTSSSCSSTKSSNSSSSGSDSEATAT), 1115–1145 (KNNRLYGAGSSSNSSSSETEEQQQQQQQHKQ), 1170–1238 (QHQQ…KSDK), 1358–1413 (YAAE…GART), 1450–1510 (EHGV…DQVS), 1543–1583 (ANGS…KATT), 1595–1641 (QTST…PPSD), and 1783–1803 (PSNSVGSQGSGSNTPPGRIVP). Positions 57 to 80 (REKYERQQGIQSDDRETSLFEAPR) are enriched in basic and acidic residues. Composition is skewed to low complexity over residues 140 to 154 (INSTTTTSSSASLLP), 161 to 178 (QQQQQQQQQQQQHYQQQQ), 223 to 253 (SASSSSSASNNNSSSATNNATAAAATSASTA), and 362 to 381 (PLNSPPAASGASSSSLSCTT). Residues 450–462 (PTPPKASPTPPTA) show a composition bias toward pro residues. Thr458 bears the Phosphothreonine mark. Residues 466-479 (LKSEKNHSLEKQDS) show a composition bias toward basic and acidic residues. Acidic residues predominate over residues 481–491 (LENDLELSESD). 2 positions are modified to phosphoserine: Ser488 and Ser490. Low complexity predominate over residues 500–540 (SAGNSSNSSETDSSESGSEASSKGEAQQQQQQQQQLLHHQH). Positions 609–625 (LGGGGGSGSTGGGGGSS) are enriched in gly residues. Low complexity-rich tracts occupy residues 626–639 (SSGMGNMSSSSSSN) and 796–813 (SISSGSASGSSSSDSAAG). The span at 867–877 (PRQKKPRKKKM) shows a compositional bias: basic residues. Ser887 and Ser888 each carry phosphoserine. The segment at residues 930-942 (KKGRGRPRKQQQQ) is a DNA-binding region (a.T hook). Residues 939–962 (QQQQLQQTQSGNLSSASAGSLAKG) show a composition bias toward low complexity. 2 positions are modified to phosphoserine: Ser953 and Ser955. Low complexity-rich tracts occupy residues 1124–1145 (SSSNSSSSETEEQQQQQQQHKQ), 1170–1186 (QHQQQQPLQPQQQQQQQ), 1200–1222 (SSSSDGSSSSSTDSSSTNSSSSS), 1362–1376 (QQQQQQQHLHTQQLH), and 1385–1399 (HYQQQHQPHQQKAQQ). Basic and acidic residues predominate over residues 1450–1467 (EHGVKPEPELDAGYEAKY). Residue Ser1546 is modified to Phosphoserine. The residue at position 1548 (Thr1548) is a Phosphothreonine. Low complexity-rich tracts occupy residues 1558-1583 (QQQQHQQQQQQQQHQPQHQQQLKATT) and 1595-1606 (QTSTTATQQPTT). Over residues 1614–1625 (TPPPVAPPPPPR) the composition is skewed to pro residues. Over residues 1783–1794 (PSNSVGSQGSGS) the composition is skewed to low complexity.

It belongs to the AF4 family.

The protein localises to the nucleus. Its function is as follows. Has a role in transcriptional regulation. Acts in parallel with the Ras/MAPK and the PI3K/PKB pathways in the control of cell identity and cellular growth. Essential for regulation of the cytoskeleton and cell growth but not for cell proliferation or growth rate. Required specifically for the microtubule-based basal transport of lipid droplets. Plays a partially redundant function downstream of Raf in cell fate specification in the developing eye. Pair-rule protein that regulates embryonic cellularization, gastrulation and segmentation. The sequence is that of AF4/FMR2 family member lilli from Drosophila grimshawi (Hawaiian fruit fly).